We begin with the raw amino-acid sequence, 394 residues long: MASFISLSSKSASWNASSCPHPSVQPFVTRKNVVRYHKPTSSEPSYSPLTTTLSSNLNSQFMQVYETLKSELIHDPLFEFDDDSRQWVERMIDYTVPGGKMVRGYSVVDSYQLLKGEELTEEEAFLACALGWCTEWFQAFILLHDDMMDGSHTRRGQPCWFRLPEVGAVAINDGVLLRNHVHRILKKHFQGKAYYVHLVDLFNETEFQTISGQMIDTISRLAGQKELSKYSMSLNRRIVQYKGAYYSCYLPIACALLMFGENLDDYVQVKDILVELGMYYQIQNDYLDTFGDPNVFGKTGTDIEECKCSWLIAKALELANEEQKKILSENYGIKDPAKVAKVKEIYHALNLKGAYEDYETNLYENSMKAIKAHPSIAVQAVLKSCLEKMYKGHK.

The transit peptide at Met-1–Tyr-65 directs the protein to the chloroplast. Residues Lys-100, Arg-103, and Gln-138 each coordinate isopentenyl diphosphate. 2 residues coordinate Mg(2+): Asp-145 and Asp-149. Positions Asp-145–Asp-149 match the DDXXD motif motif. Position 154 (Arg-154) interacts with dimethylallyl diphosphate. Arg-155 provides a ligand contact to isopentenyl diphosphate. Positions 242, 281, 298, and 307 each coordinate dimethylallyl diphosphate.

It belongs to the FPP/GGPP synthase family. It depends on Mg(2+) as a cofactor. Mn(2+) is required as a cofactor.

The protein localises to the plastid. The protein resides in the chloroplast. The catalysed reaction is isopentenyl diphosphate + dimethylallyl diphosphate = (2E)-geranyl diphosphate + diphosphate. It carries out the reaction 2 dimethylallyl diphosphate = (R,R)-chrysanthemyl diphosphate + diphosphate. The enzyme catalyses 2 dimethylallyl diphosphate = (R)-lavandulyl diphosphate + diphosphate. Its function is as follows. Condenses two molecules of dimethylallyl diphosphate (DMAPP) to produce mainly an irregular monoterpene, chrysanthemyl diphosphate (CPP) and lower amounts of a branched monoterpene, lavandulyl diphosphate (LPP). CPP is a precursor of the pyrethrin insecticides. When incubated with isopentenyl diphosphate (IPP) and DMAPP, catalyzes three competing isoprenoid condensation reactions, a chain elongation to give geranyl diphosphate (GPP), a cyclopropanation to give CPP and a branching to give LPP. The chain is Monoterpene synthase FDS-5, chloroplastic (FDS-5) from Artemisia spiciformis (Spiked big sagebrush).